We begin with the raw amino-acid sequence, 427 residues long: Probable transcription factor At5g28040 (427 aa).

A disordered region spans residues 1–81 (MASDQRDTDF…APATKSSSGT (81 aa)). S14 is subject to Phosphoserine. A compositionally biased stretch (gly residues) spans 22 to 32 (GGGGGGRGGGE). A compositionally biased stretch (acidic residues) spans 33 to 62 (TESDEDVVIPEPNEAEDDDHDPDPDPEYED).

The protein belongs to the GeBP family.

The chain is Probable transcription factor At5g28040 from Arabidopsis thaliana (Mouse-ear cress).